The chain runs to 63 residues: Hyphancin-3F (63 aa).

The N-terminal stretch at 1-22 is a signal peptide; it reads MNFSRILFFVFACFVALASVSA. Positions 23–26 are cleaved as a propeptide — removed by a dipeptidylpeptidase; it reads APEP. Leu61 carries the post-translational modification Leucine amide.

This sequence belongs to the cecropin family.

The protein localises to the secreted. Has antibacterial activity. The sequence is that of Hyphancin-3F from Hyphantria cunea (Fall webworm moth).